The chain runs to 314 residues: MWVAWSARTAALALLLGALHGAPTRGQEYDYYGWQAEPLHGRSYSKPPQCLDIPADLPLCHTVGYKRMRLPNLLEHESLAEVKQQASSWLPLLAKRCHSDTQVFLCSLFAPVCLDRPIYPCRSLCEAARAGCAPLMEAYGFPWPEMLHCHKFPLDNDLCIAVQFGHLPATAPPVTKICAQCEMEHSADGLMEQMCSSDFVVKMRIKEIKIDNGDRKLIGAQKKKKLLKAGPLKRKDTKKLVLHMKNGASCPCPQLDNLTGSFLVMGRKVEGQLLLTAVYRWDKKNKEMKFAVKFMFSYPCSLYYPFFYGAAEPH.

The first 21 residues, 1-21 (MWVAWSARTAALALLLGALHG), serve as a signal peptide directing secretion. Residues 45–162 (SKPPQCLDIP…PLDNDLCIAV (118 aa)) form the FZ domain. 8 disulfides stabilise this stretch: Cys-50–Cys-113, Cys-60–Cys-106, Cys-97–Cys-132, Cys-121–Cys-159, Cys-125–Cys-149, Cys-178–Cys-250, Cys-181–Cys-252, and Cys-195–Cys-300. The region spanning 178–300 (CAQCEMEHSA…AVKFMFSYPC (123 aa)) is the NTR domain.

It belongs to the secreted frizzled-related protein (sFRP) family.

The protein localises to the secreted. In terms of biological role, soluble frizzled-related proteins (sFRPS) function as modulators of Wnt signaling through direct interaction with Wnts. They have a role in regulating cell growth and differentiation in specific cell types. SFRP5 may be involved in determining the polarity of photoreceptor, and perhaps, other cells in the retina. In Mus musculus (Mouse), this protein is Secreted frizzled-related protein 5 (Sfrp5).